The primary structure comprises 1405 residues: ATP-dependent helicase/nuclease subunit A (1405 aa).

The UvrD-like helicase ATP-binding domain maps to 7–482 (REWTPDQLAA…ILLKANFRSR (476 aa)). An ATP-binding site is contributed by 28 to 35 (AAAGAGKT). In terms of domain architecture, UvrD-like helicase C-terminal spans 551–914 (PEAVGAGKGG…RVMSIHRAKG (364 aa)). Disordered regions lie at residues 778 to 797 (QEPW…KAVP) and 1132 to 1165 (AGKT…QDET). A compositionally biased stretch (low complexity) spans 787–796 (GPGAAAGKAV).

It belongs to the helicase family. AddA subfamily. Heterodimer of AddA and AddB/RexB. Mg(2+) serves as cofactor.

It catalyses the reaction Couples ATP hydrolysis with the unwinding of duplex DNA by translocating in the 3'-5' direction.. The enzyme catalyses ATP + H2O = ADP + phosphate + H(+). Functionally, the heterodimer acts as both an ATP-dependent DNA helicase and an ATP-dependent, dual-direction single-stranded exonuclease. Recognizes the chi site generating a DNA molecule suitable for the initiation of homologous recombination. The AddA nuclease domain is required for chi fragment generation; this subunit has the helicase and 3' -&gt; 5' nuclease activities. The protein is ATP-dependent helicase/nuclease subunit A of Moorella thermoacetica (strain ATCC 39073 / JCM 9320).